A 141-amino-acid chain; its full sequence is Cystatin (141 aa).

The N-terminal stretch at 1 to 26 (MVHSQLPVAGPLRLLCALLLLPSATM) is a signal peptide. The 101-residue stretch at 29–129 (GGLSPRSVTD…CRFQVWSRPW (101 aa)) folds into the Cystatin domain. Positions 73–77 (QVVSG) match the Secondary area of contact motif. Intrachain disulfides connect Cys-91–Cys-107 and Cys-120–Cys-140.

This sequence belongs to the cystatin family. Expressed at a low level by the venom gland (at protein level).

The protein localises to the secreted. Functionally, inhibits various C1 cysteine proteases including cathepsin L, papain and cathepsin B. This protein has no toxic activity and its function in the venom is unknown. It may play a role as a housekeeping or regulatory protein. This chain is Cystatin, found in Pseudechis porphyriacus (Red-bellied black snake).